The primary structure comprises 158 residues: Endoribonuclease YbeY (158 aa).

H119, H123, and D129 together coordinate Zn(2+).

Belongs to the endoribonuclease YbeY family. Zn(2+) serves as cofactor.

Its subcellular location is the cytoplasm. Single strand-specific metallo-endoribonuclease involved in late-stage 70S ribosome quality control and in maturation of the 3' terminus of the 16S rRNA. In Chlamydia pneumoniae (Chlamydophila pneumoniae), this protein is Endoribonuclease YbeY.